We begin with the raw amino-acid sequence, 1199 residues long: Major DNA-binding protein (1199 aa).

The tract at residues 289–314 (SGTTTARGARRNDVNSTSKPSPSGGF) is disordered. Residues 497–510 (CSLCEKHTRPVCAH) fold into a zinc finger. 2 short sequence motifs (required for filament formation) span residues 841–842 (FW) and 1146–1148 (FNF). The tract at residues 1172–1199 (LKRPPEDDELFDLSGIPIKHGNITMEMI) is required for nuclear localization.

The protein belongs to the herpesviridae major DNA-binding protein family. In terms of assembly, homooligomers. Forms double-helical filaments necessary for the formation of replication compartments within the host nucleus. Interacts with the origin-binding protein. Interacts with the helicase primase complex; this interaction stimulates primer synthesis activity of the helicase-primase complex. Interacts with the DNA polymerase. Interacts with the alkaline exonuclease; this interaction increases its nuclease processivity.

Its subcellular location is the host nucleus. Its function is as follows. Plays several crucial roles in viral infection. Participates in the opening of the viral DNA origin to initiate replication by interacting with the origin-binding protein. May disrupt loops, hairpins and other secondary structures present on ssDNA to reduce and eliminate pausing of viral DNA polymerase at specific sites during elongation. Promotes viral DNA recombination by performing strand-transfer, characterized by the ability to transfer a DNA strand from a linear duplex to a complementary single-stranded DNA circle. Can also catalyze the renaturation of complementary single strands. Additionally, reorganizes the host cell nucleus, leading to the formation of prereplicative sites and replication compartments. This process is driven by the protein which can form double-helical filaments in the absence of DNA. This is Major DNA-binding protein from Varicella-zoster virus (strain Oka vaccine) (HHV-3).